The chain runs to 385 residues: Heptahelical transmembrane protein 4 (385 aa).

Positions 1–12 (MGDEAEIKEHLK) are enriched in basic and acidic residues. Residues 1–22 (MGDEAEIKEHLKPQASSETMDK) form a disordered region. Residues 1–79 (MGDEAEIKEH…LSIFTIHNET (79 aa)) are Cytoplasmic-facing. Residues 80-100 (LNVWTHLIGFFLFLALTIYTA) traverse the membrane as a helical segment. Topologically, residues 101-191 (TKVPSVVDLH…LIFRPITRWP (91 aa)) are extracellular. The helical transmembrane segment at 192–212 (FYAFLGGAMFCLLASSTCHLL) threads the bilayer. At 213-228 (SCHSERVSYIMLRLDY) the chain is on the cytoplasmic side. The chain crosses the membrane as a helical span at residues 229-249 (AGIAALIATSFYPPVYYSFMC). Residues 250–256 (DPFFCNL) lie on the Extracellular side of the membrane. Residues 257–277 (YLGFITILGIATVLVSLLPVF) form a helical membrane-spanning segment. Over 278–288 (QSPEFRVVRAS) the chain is Cytoplasmic. A helical membrane pass occupies residues 289 to 309 (LFFGMGFSGLAPILHKLIIFW). Over 310–313 (DQPE) the chain is Extracellular. A helical membrane pass occupies residues 314–334 (ALHTTGYEILMGLLYGLGALV). Topologically, residues 335–356 (YATRIPERWMPGKFDIAGHSHQ) are cytoplasmic. A helical membrane pass occupies residues 357 to 377 (LFHVLVVAGAFTHYRAGLVYL).

Belongs to the ADIPOR family. In terms of tissue distribution, expressed in roots, leaves, stems and flowers.

The protein localises to the membrane. May play a role in abiotic stress response. This is Heptahelical transmembrane protein 4 (HHP4) from Arabidopsis thaliana (Mouse-ear cress).